The sequence spans 276 residues: Glutamate racemase (276 aa).

Substrate is bound by residues 10-11 and 42-43; these read DS and YG. The Proton donor/acceptor role is filled by Cys-73. Position 74 to 75 (74 to 75) interacts with substrate; sequence NS. Cys-183 (proton donor/acceptor) is an active-site residue. 184–185 provides a ligand contact to substrate; the sequence is TH.

The protein belongs to the aspartate/glutamate racemases family.

It carries out the reaction L-glutamate = D-glutamate. Its pathway is cell wall biogenesis; peptidoglycan biosynthesis. Functionally, provides the (R)-glutamate required for cell wall biosynthesis. The polypeptide is Glutamate racemase (Parafrankia sp. (strain EAN1pec)).